The chain runs to 711 residues: Triacylglycerol hydrolase DDHD2 (711 aa).

The tract at residues 1–24 is disordered; the sequence is MSSVQSQQEQLSQSDPSPSPNSCS. One can recognise a WWE domain in the interval 30-112; it reads DMDAGSLYEP…WDELASEVRR (83 aa). Serine 351 (nucleophile) is an active-site residue. Residues 385-448 enclose the SAM domain; sequence GDTPTLEEDL…NYFSTRKNSM (64 aa). A Phosphoserine modification is found at serine 447. Disordered stretches follow at residues 449–470 and 609–638; these read GIKR…SEFC and LQAS…EETS. One can recognise a DDHD domain in the interval 495–700; the sequence is LIYKPEIFFA…VLLVLKEIYQ (206 aa). The span at 614–624 shows a compositional bias: acidic residues; the sequence is TPEETEAEPES.

It belongs to the PA-PLA1 family. As to quaternary structure, forms homooligomers and, to a much smaller extent, heterooligomers with DDHD1. As to expression, widely expressed (at protein level).

It localises to the cytoplasm. It is found in the cytosol. Its subcellular location is the endoplasmic reticulum-Golgi intermediate compartment. The protein localises to the golgi apparatus. The protein resides in the cis-Golgi network. It carries out the reaction a triacylglycerol + H2O = a diacylglycerol + a fatty acid + H(+). The catalysed reaction is a diacylglycerol + H2O = a monoacylglycerol + a fatty acid + H(+). The enzyme catalyses a 1,3-diacylglycerol + H2O = a 1-acylglycerol + a fatty acid + H(+). It catalyses the reaction a 1-acylglycerol + H2O = glycerol + a fatty acid + H(+). It carries out the reaction 1,2,3-tri-(9Z-octadecenoyl)-glycerol + H2O = di-(9Z)-octadecenoylglycerol + (9Z)-octadecenoate + H(+). The catalysed reaction is di-(9Z)-octadecenoylglycerol + H2O = (9Z-octadecenoyl)-glycerol + (9Z)-octadecenoate + H(+). The enzyme catalyses 1,3-di-(9Z-octadecenoyl)-glycerol + H2O = 1-(9Z-octadecenoyl)-glycerol + (9Z)-octadecenoate + H(+). It catalyses the reaction trihexadecanoylglycerol + H2O = dihexadecanoylglycerol + hexadecanoate + H(+). It carries out the reaction 1,2-di-(9Z-octadecenoyl)-sn-glycero-3-phosphocholine + H2O = (9Z-octadecenoyl)-sn-glycero-3-phosphocholine + (9Z)-octadecenoate + H(+). The catalysed reaction is 1-(9Z-octadecenoyl)-glycerol + H2O = glycerol + (9Z)-octadecenoate + H(+). The enzyme catalyses 1,2-di-(9Z-octadecenoyl)-sn-glycero-3-phosphate + H2O = 2-(9Z-octadecenoyl)-sn-glycero-3-phosphate + (9Z)-octadecenoate + H(+). It catalyses the reaction 1-hexadecanoyl-2-(9Z-octadecenoyl)-sn-glycero-3-phosphate + H2O = 2-(9Z-octadecenoyl)-sn-glycero-3-phosphate + hexadecanoate + H(+). It carries out the reaction 1-hexadecanoyl-2-(9Z-octadecenoyl)-sn-glycero-3-phosphoethanolamine + H2O = 2-(9Z-octadecenoyl)-sn-glycero-3-phosphoethanolamine + hexadecanoate + H(+). The catalysed reaction is 1-hexadecanoyl-2-(9Z-octadecenoyl)-sn-glycero-3-phospho-L-serine + H2O = 2-(9Z-octadecenoyl)-sn-glycero-3-phospho-L-serine + hexadecanoate + H(+). The enzyme catalyses 1-hexadecanoyl-2-(9Z-octadecenoyl)-sn-glycero-3-phosphocholine + H2O = 2-(9Z-octadecenoyl)-sn-glycero-3-phosphocholine + hexadecanoate + H(+). In terms of biological role, diacylglycerol (DAG) and triacylglycerol (TAG) lipase required for proper lipid homeostasis in the central nervous system. It cooperates with PNPLA2/ATGL in neuronal TAG catabolism and hydrolyzes sn-1,3 DAG downstream of PNPLA2/ATGL. In vitro, it also acts as a phospholipase that hydrolyzes preferentially phosphatidic acids, including 1,2-dioleoyl-sn-phosphatidic acid, phosphatidylcholine and phosphatidylethanolamine. Specifically binds to phosphatidylinositol 3-phosphate (PI(3)P), phosphatidylinositol 4-phosphate (PI(4)P), phosphatidylinositol 5-phosphate (PI(5)P) and possibly phosphatidylinositol 4,5-bisphosphate (PI(4,5)P2). May be involved in the maintenance of the endoplasmic reticulum and/or Golgi structures. May regulate the transport between Golgi apparatus and plasma membrane. In Homo sapiens (Human), this protein is Triacylglycerol hydrolase DDHD2.